The chain runs to 551 residues: Chaperonin GroEL 2 (551 aa).

Residues 30–33, lysine 51, 87–91, glycine 415, and aspartate 496 contribute to the ATP site; these read TLGP and DGTTT.

Belongs to the chaperonin (HSP60) family. As to quaternary structure, forms a cylinder of 14 subunits composed of two heptameric rings stacked back-to-back. Interacts with the co-chaperonin GroES.

The protein localises to the cytoplasm. The enzyme catalyses ATP + H2O + a folded polypeptide = ADP + phosphate + an unfolded polypeptide.. In terms of biological role, together with its co-chaperonin GroES, plays an essential role in assisting protein folding. The GroEL-GroES system forms a nano-cage that allows encapsulation of the non-native substrate proteins and provides a physical environment optimized to promote and accelerate protein folding. In Rhodopseudomonas palustris (strain BisB18), this protein is Chaperonin GroEL 2.